Here is a 302-residue protein sequence, read N- to C-terminus: Sulfate adenylyltransferase subunit 2 2 (302 aa).

The protein belongs to the PAPS reductase family. CysD subfamily. As to quaternary structure, heterodimer composed of CysD, the smaller subunit, and CysN.

It carries out the reaction sulfate + ATP + H(+) = adenosine 5'-phosphosulfate + diphosphate. The protein operates within sulfur metabolism; hydrogen sulfide biosynthesis; sulfite from sulfate: step 1/3. In terms of biological role, with CysN forms the ATP sulfurylase (ATPS) that catalyzes the adenylation of sulfate producing adenosine 5'-phosphosulfate (APS) and diphosphate, the first enzymatic step in sulfur assimilation pathway. APS synthesis involves the formation of a high-energy phosphoric-sulfuric acid anhydride bond driven by GTP hydrolysis by CysN coupled to ATP hydrolysis by CysD. The sequence is that of Sulfate adenylyltransferase subunit 2 2 from Alkalilimnicola ehrlichii (strain ATCC BAA-1101 / DSM 17681 / MLHE-1).